The sequence spans 521 residues: Probable feruloyl esterase B-2 (521 aa).

An N-terminal signal peptide occupies residues 1-19 (MKVSLWLTLLGVNLSLALA). 5 N-linked (GlcNAc...) asparagine glycosylation sites follow: Asn13, Asn53, Asn85, Asn98, and Asn138. 2 disulfide bridges follow: Cys28–Cys75 and Cys63–Cys114. Disulfide bonds link Cys187–Cys440, Cys257–Cys274, Cys283–Cys291, and Cys506–Cys520. The active-site Acyl-ester intermediate is the Ser188. An N-linked (GlcNAc...) asparagine glycan is attached at Asn235. Residues Asp258, Asp261, Val263, Asp265, and Ile267 each contribute to the Ca(2+) site. The active-site Charge relay system is Asp399. Asn419 is a glycosylation site (N-linked (GlcNAc...) asparagine). His439 acts as the Charge relay system in catalysis.

It belongs to the tannase family.

The protein resides in the secreted. It carries out the reaction feruloyl-polysaccharide + H2O = ferulate + polysaccharide.. Functionally, involved in degradation of plant cell walls. Hydrolyzes the feruloyl-arabinose ester bond in arabinoxylans as well as the feruloyl-galactose and feruloyl-arabinose ester bonds in pectin. The protein is Probable feruloyl esterase B-2 (faeB-2) of Aspergillus flavus (strain ATCC 200026 / FGSC A1120 / IAM 13836 / NRRL 3357 / JCM 12722 / SRRC 167).